Reading from the N-terminus, the 401-residue chain is Probable peptidoglycan glycosyltransferase FtsW (401 aa).

Residues 1-26 (MAEVLRWLRLDLGQSGGLAWERLDWR) are Cytoplasmic-facing. A helical membrane pass occupies residues 27–47 (LALTVLALAGLGLVMVGSASV). Topologically, residues 48–65 (SIAEGATGDPLHYLYRQA) are periplasmic. A helical membrane pass occupies residues 66–86 (VFLAVALMAAVACLHLSLDQF). Residues 87 to 88 (YR) are Cytoplasmic-facing. Residues 89–109 (GGPVLLVLGFFLLLVVLIPGV) form a helical membrane-spanning segment. Over 110–118 (GREVNGATR) the chain is Periplasmic. A helical transmembrane segment spans residues 119–139 (WIPLGLINLQVAEVARVCFII). Residues 140-154 (YLAGYCVRRHAELPN) lie on the Cytoplasmic side of the membrane. A helical membrane pass occupies residues 155 to 175 (TSSAFAVPLAVFSLAAVLLLA). The Periplasmic portion of the chain corresponds to 176 to 180 (QPDFG). Residues 181–201 (TALVLMATALGLLFLAGASLW) traverse the membrane as a helical segment. Position 202 (Arg202) is a topological domain, cytoplasmic. A helical transmembrane segment spans residues 203–223 (IGVLGLLLAGAAWLLIVGSPY). Topologically, residues 224 to 278 (RWQRLTTFTDPWADPFNAGFQLTQSLIAIGRGEWFGVGLGASVQKLFYLPEAHTD) are periplasmic. A helical transmembrane segment spans residues 279-299 (FLFAVLAEELGLLGVVVVVAL). Residues 300 to 322 (FTYLAWRGMQIGLASLRADRPFG) are Cytoplasmic-facing. A helical membrane pass occupies residues 323 to 343 (AYLAWGLTISIGLQAFINMAV). Over 344–354 (TMGLLPTKGLT) the chain is Periplasmic. Residues 355 to 375 (LPLMSYGGSSLIMTGIALALL) traverse the membrane as a helical segment. The Cytoplasmic segment spans residues 376-401 (LRVDYEARLAAQQPRPRKRPSGRVRP).

Belongs to the SEDS family. FtsW subfamily.

The protein localises to the cell inner membrane. It carries out the reaction [GlcNAc-(1-&gt;4)-Mur2Ac(oyl-L-Ala-gamma-D-Glu-L-Lys-D-Ala-D-Ala)](n)-di-trans,octa-cis-undecaprenyl diphosphate + beta-D-GlcNAc-(1-&gt;4)-Mur2Ac(oyl-L-Ala-gamma-D-Glu-L-Lys-D-Ala-D-Ala)-di-trans,octa-cis-undecaprenyl diphosphate = [GlcNAc-(1-&gt;4)-Mur2Ac(oyl-L-Ala-gamma-D-Glu-L-Lys-D-Ala-D-Ala)](n+1)-di-trans,octa-cis-undecaprenyl diphosphate + di-trans,octa-cis-undecaprenyl diphosphate + H(+). Its pathway is cell wall biogenesis; peptidoglycan biosynthesis. Functionally, peptidoglycan polymerase that is essential for cell division. In Alkalilimnicola ehrlichii (strain ATCC BAA-1101 / DSM 17681 / MLHE-1), this protein is Probable peptidoglycan glycosyltransferase FtsW.